A 467-amino-acid chain; its full sequence is Probable protein phosphatase 2C 6 (467 aa).

The disordered stretch occupies residues 61–81 (VEDDAVAPGRGEEGGEASAVG). Residues 149 to 457 (LWGHKSICGR…DNISVIVVDL (309 aa)) form the PPM-type phosphatase domain. Positions 205, 206, 386, and 448 each coordinate Mn(2+).

It belongs to the PP2C family. In terms of assembly, interacts with PYL9. Requires Mg(2+) as cofactor. The cofactor is Mn(2+).

It is found in the nucleus. The protein resides in the cytoplasm. It localises to the cytosol. The catalysed reaction is O-phospho-L-seryl-[protein] + H2O = L-seryl-[protein] + phosphate. It catalyses the reaction O-phospho-L-threonyl-[protein] + H2O = L-threonyl-[protein] + phosphate. In terms of biological role, probable protein phosphatase that may function in abscisic acid (ABA) signaling. This chain is Probable protein phosphatase 2C 6, found in Oryza sativa subsp. japonica (Rice).